The primary structure comprises 486 residues: tRNA (uracil-5-)-methyltransferase homolog B (486 aa).

Residues Gln-305, Glu-355, and Asn-405 each coordinate S-adenosyl-L-methionine. Residue Cys-433 is the Nucleophile of the active site. Glu-479 functions as the Proton acceptor in the catalytic mechanism.

The protein belongs to the class I-like SAM-binding methyltransferase superfamily. RNA M5U methyltransferase family.

It localises to the mitochondrion matrix. It catalyses the reaction uridine(54) in tRNA + S-adenosyl-L-methionine = 5-methyluridine(54) in tRNA + S-adenosyl-L-homocysteine + H(+). It carries out the reaction a uridine in 12S rRNA + S-adenosyl-L-methionine = a 5-methyluridine in 12S rRNA + S-adenosyl-L-homocysteine + H(+). Mitochondrial S-adenosyl-L-methionine-dependent methyltransferase that catalyzes the formation of 5-methyl-uridine in tRNAs and 12S rRNA. Catalyzes the methylation of uridine at position 54 (m5U54) in all tRNAs. Specifically methylates the uridine in position 429 of 12S rRNA (m5U429). Does not affect RNA stability or mitochondrial translation. The protein is tRNA (uracil-5-)-methyltransferase homolog B (TRMT2B) of Pongo abelii (Sumatran orangutan).